The primary structure comprises 130 residues: Small ribosomal subunit protein uS11 (130 aa).

Belongs to the universal ribosomal protein uS11 family. In terms of assembly, part of the 30S ribosomal subunit.

Located on the platform of the 30S subunit. The chain is Small ribosomal subunit protein uS11 from Ignicoccus hospitalis (strain KIN4/I / DSM 18386 / JCM 14125).